The sequence spans 338 residues: Glycerol-3-phosphate dehydrogenase [NAD(P)+] (338 aa).

NADPH is bound by residues W11, R30, and K109. Sn-glycerol 3-phosphate-binding residues include K109, G143, and S145. A147 lines the NADPH pocket. Sn-glycerol 3-phosphate is bound by residues K198, D251, S261, R262, and N263. The active-site Proton acceptor is K198. R262 contributes to the NADPH binding site. Positions 286 and 288 each coordinate NADPH.

Belongs to the NAD-dependent glycerol-3-phosphate dehydrogenase family.

It localises to the cytoplasm. The catalysed reaction is sn-glycerol 3-phosphate + NAD(+) = dihydroxyacetone phosphate + NADH + H(+). It catalyses the reaction sn-glycerol 3-phosphate + NADP(+) = dihydroxyacetone phosphate + NADPH + H(+). Its pathway is membrane lipid metabolism; glycerophospholipid metabolism. Catalyzes the reduction of the glycolytic intermediate dihydroxyacetone phosphate (DHAP) to sn-glycerol 3-phosphate (G3P), the key precursor for phospholipid synthesis. The sequence is that of Glycerol-3-phosphate dehydrogenase [NAD(P)+] from Cupriavidus necator (strain ATCC 17699 / DSM 428 / KCTC 22496 / NCIMB 10442 / H16 / Stanier 337) (Ralstonia eutropha).